The primary structure comprises 537 residues: Putative cysteine ligase BshC (537 aa).

The stretch at 415–439 (EKASNNFINEVEEMKIQQQELYNNL) forms a coiled coil.

Belongs to the BshC family.

Functionally, involved in bacillithiol (BSH) biosynthesis. May catalyze the last step of the pathway, the addition of cysteine to glucosamine malate (GlcN-Mal) to generate BSH. The sequence is that of Putative cysteine ligase BshC from Staphylococcus epidermidis (strain ATCC 12228 / FDA PCI 1200).